A 237-amino-acid chain; its full sequence is Ankyrin repeat protein 14 (237 aa).

ANK repeat units lie at residues 27–56 and 60–90; these read RGET…DVNI and NGYT…TLDC.

Functionally, may be involved in virus-host protein interaction through the ankyrin repeats. The sequence is that of Ankyrin repeat protein 14 from Vaccinia virus (strain Western Reserve) (VACV).